The sequence spans 205 residues: Outer-membrane lipoprotein carrier protein (205 aa).

The first 19 residues, 1-19 (MKKIIICFIFVFSINISFA), serve as a signal peptide directing secretion.

Belongs to the LolA family. Monomer.

It localises to the periplasm. Its function is as follows. Participates in the translocation of lipoproteins from the inner membrane to the outer membrane. Only forms a complex with a lipoprotein if the residue after the N-terminal Cys is not an aspartate (The Asp acts as a targeting signal to indicate that the lipoprotein should stay in the inner membrane). This is Outer-membrane lipoprotein carrier protein from Francisella tularensis subsp. novicida (strain U112).